Here is a 156-residue protein sequence, read N- to C-terminus: MAMKMKGIYKSFKSIMFVGKERDLEIGHPTEVKHVAHIGWGSSGSDPGWMSDFKAGAEFLSPRTSSFSHTRHSDSFFTTSDSTEFDQDQLNISDRIRDVPPIPVGLSKIHTKSKNRRKKPSSTSSPRSRPSPKSSRSMGLSKSSHKSMVSRLNSNA.

A CRIB domain is found at 26 to 39 (IGHPTEVKHVAHIG). The interval 87–156 (QDQLNISDRI…SMVSRLNSNA (70 aa)) is disordered. Residues 109–120 (IHTKSKNRRKKP) are compositionally biased toward basic residues. The segment covering 121-142 (SSTSSPRSRPSPKSSRSMGLSK) has biased composition (low complexity).

Functionally, functions as a downstream effector of Rho-related GTP binding proteins of the 'Rho of Plants' (ROPs) family. Participates in the propagation of ROP GTPase signals in specific cellular responses. The sequence is that of CRIB domain-containing protein RIC11 (RIC11) from Arabidopsis thaliana (Mouse-ear cress).